Reading from the N-terminus, the 340-residue chain is Large ribosomal subunit protein uL29m (340 aa).

The span at 1–10 shows a compositional bias: polar residues; that stretch reads MIRSLHTSAV. Residues 1–22 form a disordered region; that stretch reads MIRSLHTSAVRQGRKKWPKPLP.

This sequence belongs to the universal ribosomal protein uL29 family. In terms of assembly, component of the mitochondrial large ribosomal subunit. Mature mitochondrial ribosomes consist of a small (37S) and a large (54S) subunit. The 37S subunit contains at least 33 different proteins and 1 molecule of RNA (15S). The 54S subunit contains at least 45 different proteins and 1 molecule of RNA (21S).

It is found in the mitochondrion. This Yarrowia lipolytica (strain CLIB 122 / E 150) (Yeast) protein is Large ribosomal subunit protein uL29m (MRPL4).